A 308-amino-acid chain; its full sequence is Beta-1,3-galactosyltransferase 5 (308 aa).

The Cytoplasmic portion of the chain corresponds to 1-7 (MAHMKTR). Residues 8–25 (LVYASILMMGALCLYFSM) traverse the membrane as a helical; Signal-anchor for type II membrane protein segment. Topologically, residues 26 to 308 (DSFRELPFVF…NSKEQDCPAV (283 aa)) are lumenal. 3 N-linked (GlcNAc...) asparagine glycosylation sites follow: Asn128, Asn172, and Asn229.

This sequence belongs to the glycosyltransferase 31 family. As to expression, expressed in brain and kidney.

It is found in the golgi apparatus membrane. It catalyses the reaction a globoside Gb4Cer (d18:1(4E)) + UDP-alpha-D-galactose = a globoside GalGb4Cer (d18:1(4E)) + UDP + H(+). It participates in protein modification; protein glycosylation. Functionally, catalyzes the transfer of Gal to GlcNAc-based acceptors with a preference for the core3 O-linked glycan GlcNAc(beta1,3)GalNAc structure. Can use glycolipid LC3Cer as an efficient acceptor. Also catalyzes the transfer of Gal to the terminal GalNAc unit of the globoside GB4, thereby synthesizing the glycolipid GB5, also known as the stage-specific embryonic antigen-3 (SSEA-3). The protein is Beta-1,3-galactosyltransferase 5 of Mus musculus (Mouse).